The primary structure comprises 353 residues: Peroxisome assembly protein 12-A (353 aa).

The Peroxisomal matrix portion of the chain corresponds to Met-1 to Ser-19. Residues Ile-20–Ser-47 form a helical membrane-spanning segment. Residues Asn-48 to Arg-51 lie on the Cytoplasmic side of the membrane. The helical transmembrane segment at Tyr-52 to Ser-76 threads the bilayer. At Trp-77 to Pro-104 the chain is on the peroxisomal matrix side. A helical transmembrane segment spans residues Arg-105 to Glu-134. Residues Glu-135–Ser-139 lie on the Cytoplasmic side of the membrane. Residues Ile-140–Leu-178 traverse the membrane as a helical segment. The Peroxisomal matrix segment spans residues Trp-179–Ser-243. The helical transmembrane segment at Ser-244 to Asn-271 threads the bilayer. Residues Asn-272–Gly-353 are Cytoplasmic-facing. Cys-298, Cys-301, Cys-319, and Cys-322 together coordinate Zn(2+). The RING-type; degenerate zinc-finger motif lies at Cys-298–Gly-337.

Belongs to the pex2/pex10/pex12 family. Component of the PEX2-PEX10-PEX12 retrotranslocation channel.

The protein localises to the peroxisome membrane. It functions in the pathway protein modification; protein ubiquitination. Component of a retrotranslocation channel required for peroxisome organization by mediating export of the PEX5 receptor from peroxisomes to the cytosol, thereby promoting PEX5 recycling. The retrotranslocation channel is composed of PEX2, PEX10 and PEX12; each subunit contributing transmembrane segments that coassemble into an open channel that specifically allows the passage of PEX5 through the peroxisomal membrane. PEX12 also regulates PEX5 recycling by activating the E3 ubiquitin-protein ligase activity of PEX10. When PEX5 recycling is compromised, PEX12 stimulates PEX10-mediated polyubiquitination of PEX5, leading to its subsequent degradation. This chain is Peroxisome assembly protein 12-A, found in Xenopus laevis (African clawed frog).